The chain runs to 166 residues: Large ribosomal subunit protein uL10 (166 aa).

This sequence belongs to the universal ribosomal protein uL10 family. In terms of assembly, part of the ribosomal stalk of the 50S ribosomal subunit. The N-terminus interacts with L11 and the large rRNA to form the base of the stalk. The C-terminus forms an elongated spine to which L12 dimers bind in a sequential fashion forming a multimeric L10(L12)X complex.

Functionally, forms part of the ribosomal stalk, playing a central role in the interaction of the ribosome with GTP-bound translation factors. This chain is Large ribosomal subunit protein uL10, found in Shewanella denitrificans (strain OS217 / ATCC BAA-1090 / DSM 15013).